We begin with the raw amino-acid sequence, 1510 residues long: ABC transporter C family MRP4 (1510 aa).

12 helical membrane passes run Glu12–Leu32, Pro55–Trp75, Ala78–Val98, Ala109–Gln129, Phe138–Tyr158, Met177–Gly197, Thr319–Val339, Leu342–Ala362, Trp373–Tyr393, Ala427–Leu447, Ile453–Ala473, and Phe540–Leu560. In terms of domain architecture, ABC transmembrane type-1 1 spans Phe320–Gln595. The region spanning Val629–Ala852 is the ABC transporter 1 domain. Gly664–Ser671 lines the ATP pocket. Residues Leu889 to Arg925 form a disordered region. Residues Lys906–Arg918 show a composition bias toward basic residues. The next 6 helical transmembrane spans lie at Gly945–Ser965, Ser985–Met1005, Ile1060–Ser1082, Trp1086–Ala1108, Leu1154–Leu1174, and Leu1179–Ile1199. The ABC transmembrane type-1 2 domain occupies Leu950–Arg1220. Residues Ile1267–Ser1501 enclose the ABC transporter 2 domain. Gly1301 to Ser1308 serves as a coordination point for ATP.

It belongs to the ABC transporter superfamily. ABCC family. Conjugate transporter (TC 3.A.1.208) subfamily. As to expression, expressed in roots, leaves, stalks, tassels, silks, developing seeds and developing embryos.

It is found in the membrane. In terms of biological role, ABC transporter that may affect phytic acid transport and compartmentalization. May function directly or indirectly in removing phytic acid from the cytosol or in vesicle trafficking. Required for phytic acid accumulation in developing seeds. Phytic acid is the primary storage form of phosphorus in cereal grains and other plant seeds. The polypeptide is ABC transporter C family MRP4 (Zea mays (Maize)).